The sequence spans 345 residues: S-adenosylmethionine:tRNA ribosyltransferase-isomerase (345 aa).

Belongs to the QueA family. Monomer.

Its subcellular location is the cytoplasm. The catalysed reaction is 7-aminomethyl-7-carbaguanosine(34) in tRNA + S-adenosyl-L-methionine = epoxyqueuosine(34) in tRNA + adenine + L-methionine + 2 H(+). The protein operates within tRNA modification; tRNA-queuosine biosynthesis. Transfers and isomerizes the ribose moiety from AdoMet to the 7-aminomethyl group of 7-deazaguanine (preQ1-tRNA) to give epoxyqueuosine (oQ-tRNA). In Shewanella woodyi (strain ATCC 51908 / MS32), this protein is S-adenosylmethionine:tRNA ribosyltransferase-isomerase.